A 371-amino-acid polypeptide reads, in one-letter code: Cytochrome b (371 aa).

Helical transmembrane passes span 25-45 (FGSM…SLSM), 69-90 (WVMQ…YMYI), 105-125 (WLSG…GYVL), and 170-190 (FFAL…IHIM). Residue H75 coordinates heme b. Positions 174 and 188 each coordinate heme b. H193 lines the a ubiquinone pocket. Helical transmembrane passes span 218–238 (YKDI…VSFF), 280–300 (LGGA…PFTH), 312–332 (LMQF…WTAT), and 339–358 (FTTI…MSNP).

It belongs to the cytochrome b family. As to quaternary structure, the cytochrome bc1 complex contains 3 respiratory subunits (MT-CYB, CYC1 and UQCRFS1), 2 core proteins (UQCRC1 and UQCRC2) and probably 6 low-molecular weight proteins. Heme b is required as a cofactor.

It localises to the mitochondrion inner membrane. Its function is as follows. Component of the ubiquinol-cytochrome c reductase complex (complex III or cytochrome b-c1 complex) that is part of the mitochondrial respiratory chain. The b-c1 complex mediates electron transfer from ubiquinol to cytochrome c. Contributes to the generation of a proton gradient across the mitochondrial membrane that is then used for ATP synthesis. This is Cytochrome b (MT-CYB) from Candoia aspera (New Guinea boa).